A 93-amino-acid polypeptide reads, in one-letter code: MKYCVVILALLVALVCITESRSTETGYAVAETLEDNDLDELQAYLEEIAEASEMEDFSNIEEARGFFGKMKEYFKKFGASFKRRFANLKKRLG.

The N-terminal stretch at 1–22 is a signal peptide; sequence MKYCVVILALLVALVCITESRS. The propeptide occupies 23-64; that stretch reads TETGYAVAETLEDNDLDELQAYLEEIAEASEMEDFSNIEEAR. The Processing quadruplet motif motif lies at 61 to 64; that stretch reads EEAR. The residue at position 92 (L92) is a Leucine amide.

Post-translationally, cleavage of the propeptide depends on the processing quadruplet motif (XXXR, with at least one of X being E). Expressed by the venom gland.

The protein resides in the secreted. In terms of biological role, has antimicrobial activity against. Gram-positive bacteria (A.globiformis VKM Ac-1112 (MIC=1.1 uM), and B.subtilis VKM B-501 (MIC=0.6 uM)), Gram-negative bacteria (E.coli DH5-alpha (MIC=0.6 uM), E.coli MH1 (MIC=0.6 uM), and P.aeruginosa PAO1 (MIC=18 uM)), and yeasts (P.pastoris GS115 (MIC&gt;37 uM), and S.cerevisiae Y190 (MIC&gt;37 uM)). Also has a moderate hemolytic activity against rabbit erythrocytes. Causes paralysis, but is not lethal when injected into insect (M.domestica) larvae. This Lachesana tarabaevi (Spider) protein is M-zodatoxin-Lt5a.